Reading from the N-terminus, the 174-residue chain is Large ribosomal subunit protein uL6 (174 aa).

Belongs to the universal ribosomal protein uL6 family. As to quaternary structure, part of the 50S ribosomal subunit.

In terms of biological role, this protein binds to the 23S rRNA, and is important in its secondary structure. It is located near the subunit interface in the base of the L7/L12 stalk, and near the tRNA binding site of the peptidyltransferase center. The chain is Large ribosomal subunit protein uL6 from Stenotrophomonas maltophilia (strain R551-3).